The primary structure comprises 586 residues: CTP synthase (586 aa).

Positions 1 to 265 (MVRFIFVTGG…ENKVLNFFNI (265 aa)) are amidoligase domain. Position 13 (Ser-13) interacts with CTP. Ser-13 is a binding site for UTP. ATP is bound by residues 14–19 (SLGKGI) and Asp-71. Residues Asp-71 and Glu-139 each contribute to the Mg(2+) site. Residues 146–148 (DIE), 186–191 (KTKPTQ), and Lys-222 contribute to the CTP site. UTP-binding positions include 186–191 (KTKPTQ) and Lys-222. Positions 290–582 (KIAIITKYHK…IKATIEYNKS (293 aa)) constitute a Glutamine amidotransferase type-1 domain. Gly-352 contacts L-glutamine. Cys-379 (nucleophile; for glutamine hydrolysis) is an active-site residue. L-glutamine-binding positions include 380 to 383 (FGMQ) and Glu-403. Residues 429–473 (AHISKCTYSEAFECDASTVYTNIHEDSNNLSTDKLQIETNFRNMS) enclose the RPE1 insert domain. Arg-510 is an L-glutamine binding site. Residues His-555 and Glu-557 contribute to the active site.

Belongs to the CTP synthase family. As to quaternary structure, homotetramer.

The catalysed reaction is UTP + L-glutamine + ATP + H2O = CTP + L-glutamate + ADP + phosphate + 2 H(+). The enzyme catalyses L-glutamine + H2O = L-glutamate + NH4(+). It carries out the reaction UTP + NH4(+) + ATP = CTP + ADP + phosphate + 2 H(+). The protein operates within pyrimidine metabolism; CTP biosynthesis via de novo pathway; CTP from UDP: step 2/2. Allosterically activated by GTP, when glutamine is the substrate; GTP has no effect on the reaction when ammonia is the substrate. The allosteric effector GTP functions by stabilizing the protein conformation that binds the tetrahedral intermediate(s) formed during glutamine hydrolysis. Inhibited by the product CTP, via allosteric rather than competitive inhibition. Catalyzes the ATP-dependent amination of UTP to CTP with either L-glutamine or ammonia as the source of nitrogen. Regulates intracellular CTP levels through interactions with the four ribonucleotide triphosphates. This Rickettsia prowazekii (strain Madrid E) protein is CTP synthase.